We begin with the raw amino-acid sequence, 165 residues long: Ribosome maturation factor RimM (165 aa).

Residues 94-165 (EDEFYIADLT…YVILNYQREA (72 aa)) enclose the PRC barrel domain.

Belongs to the RimM family. In terms of assembly, binds ribosomal protein uS19.

The protein localises to the cytoplasm. An accessory protein needed during the final step in the assembly of 30S ribosomal subunit, possibly for assembly of the head region. Essential for efficient processing of 16S rRNA. May be needed both before and after RbfA during the maturation of 16S rRNA. It has affinity for free ribosomal 30S subunits but not for 70S ribosomes. The protein is Ribosome maturation factor RimM of Rickettsia conorii (strain ATCC VR-613 / Malish 7).